A 65-amino-acid polypeptide reads, in one-letter code: Muscarinic toxin-like protein 2 (65 aa).

Intrachain disulfides connect C3–C24, C17–C42, C46–C57, and C58–C63.

The protein belongs to the three-finger toxin family. Short-chain subfamily. Type C muscarinic toxin sub-subfamily. Monomer. As to expression, expressed by the venom gland.

It is found in the secreted. The chain is Muscarinic toxin-like protein 2 from Naja kaouthia (Monocled cobra).